The chain runs to 397 residues: MFHRIEEALEDLKQGKVVIVCDDENRENEGDFIALAEYITPETINFMITHGRGLVCVPITEGYAERLQLEPMVAHNTDSHHTAFTVSIDHVSTTTGISAHERATTIREMLNPASKGADFNRPGHIFPLIAKEGGVLRRAGHTEAAVDLAQLCGAEPAGVICEIINEDGTMARVPDLLQCAKQFDIKMITIEDLIAYRRHHETLVTREVEITLPTDFGTFHAIGYSNSLDSKEHIALVKGDISTGDPVLVRVHSECLTGDVFGSCRCDCGPQLHAALAQIEREGKGVLLYMRQEGRGIGLLNKLRAYKLQEEGFDTVEANEKLGFPADLRDYGIGAQILKDLGLQHLRLLTNNPRKIAGLQGYDLEVIERVPLQMPAKEENKTYLQTKVNKLGHLLNL.

Positions 1–199 (MFHRIEEALE…IEDLIAYRRH (199 aa)) are DHBP synthase. Residues 26 to 27 (RE), aspartate 31, 138 to 142 (RAGHT), and glutamate 162 each bind D-ribulose 5-phosphate. Glutamate 27 provides a ligand contact to Mg(2+). Histidine 141 provides a ligand contact to Mg(2+). The interval 200-397 (HETLVTREVE…VNKLGHLLNL (198 aa)) is GTP cyclohydrolase II. A GTP-binding site is contributed by 250 to 254 (RVHSE). Zn(2+) is bound by residues cysteine 255, cysteine 266, and cysteine 268. GTP-binding positions include glutamine 271, 293 to 295 (EGR), and threonine 315. Residue aspartate 327 is the Proton acceptor; for GTP cyclohydrolase activity of the active site. Residue arginine 329 is the Nucleophile; for GTP cyclohydrolase activity of the active site. GTP contacts are provided by threonine 350 and lysine 355.

It in the N-terminal section; belongs to the DHBP synthase family. In the C-terminal section; belongs to the GTP cyclohydrolase II family. Mg(2+) serves as cofactor. It depends on Mn(2+) as a cofactor. Requires Zn(2+) as cofactor.

The catalysed reaction is D-ribulose 5-phosphate = (2S)-2-hydroxy-3-oxobutyl phosphate + formate + H(+). The enzyme catalyses GTP + 4 H2O = 2,5-diamino-6-hydroxy-4-(5-phosphoribosylamino)-pyrimidine + formate + 2 phosphate + 3 H(+). It functions in the pathway cofactor biosynthesis; riboflavin biosynthesis; 2-hydroxy-3-oxobutyl phosphate from D-ribulose 5-phosphate: step 1/1. The protein operates within cofactor biosynthesis; riboflavin biosynthesis; 5-amino-6-(D-ribitylamino)uracil from GTP: step 1/4. In terms of biological role, catalyzes the conversion of D-ribulose 5-phosphate to formate and 3,4-dihydroxy-2-butanone 4-phosphate. Functionally, catalyzes the conversion of GTP to 2,5-diamino-6-ribosylamino-4(3H)-pyrimidinone 5'-phosphate (DARP), formate and pyrophosphate. The sequence is that of Riboflavin biosynthesis protein RibBA from Bacillus cereus (strain AH187).